Reading from the N-terminus, the 138-residue chain is Large ribosomal subunit protein bL19 (138 aa).

It belongs to the bacterial ribosomal protein bL19 family.

In terms of biological role, this protein is located at the 30S-50S ribosomal subunit interface and may play a role in the structure and function of the aminoacyl-tRNA binding site. This Rickettsia rickettsii (strain Iowa) protein is Large ribosomal subunit protein bL19.